The primary structure comprises 218 residues: MLTVALPKGELLKNSIRLLKSVGLDFSAFLDSGNRQLQITDASGRAKGLLVRGQDVPVYVEYGQAQIGIIGYDVLREKQPQVAHLVDLQFGYCRMSVAVKASSPYKSPLDLPAHSRVASKYVNSAREFFQGLDLPVEIVPLYGSVELGPITGMSEAIVDIVSTGRTLKENGLVEITTLYESTARLIAHPLSYRLNTGNLHQLVEQLREGVLSELPILT.

The protein belongs to the ATP phosphoribosyltransferase family. Short subfamily. Heteromultimer composed of HisG and HisZ subunits.

It is found in the cytoplasm. The catalysed reaction is 1-(5-phospho-beta-D-ribosyl)-ATP + diphosphate = 5-phospho-alpha-D-ribose 1-diphosphate + ATP. It functions in the pathway amino-acid biosynthesis; L-histidine biosynthesis; L-histidine from 5-phospho-alpha-D-ribose 1-diphosphate: step 1/9. Catalyzes the condensation of ATP and 5-phosphoribose 1-diphosphate to form N'-(5'-phosphoribosyl)-ATP (PR-ATP). Has a crucial role in the pathway because the rate of histidine biosynthesis seems to be controlled primarily by regulation of HisG enzymatic activity. This chain is ATP phosphoribosyltransferase, found in Trichormus variabilis (strain ATCC 29413 / PCC 7937) (Anabaena variabilis).